The chain runs to 505 residues: Maturase K (505 aa).

This sequence belongs to the intron maturase 2 family. MatK subfamily.

The protein localises to the plastid. Its subcellular location is the chloroplast. Its function is as follows. Usually encoded in the trnK tRNA gene intron. Probably assists in splicing its own and other chloroplast group II introns. The sequence is that of Maturase K from Dioon edule (Virgin's palm).